Here is a 103-residue protein sequence, read N- to C-terminus: UPF0091 protein PH0944 (103 aa).

The protein belongs to the UPF0091 family.

This chain is UPF0091 protein PH0944, found in Pyrococcus horikoshii (strain ATCC 700860 / DSM 12428 / JCM 9974 / NBRC 100139 / OT-3).